The primary structure comprises 252 residues: 5'-nucleotidase SurE (252 aa).

4 residues coordinate a divalent metal cation: D8, D9, S42, and N94.

The protein belongs to the SurE nucleotidase family. It depends on a divalent metal cation as a cofactor.

It is found in the cytoplasm. The enzyme catalyses a ribonucleoside 5'-phosphate + H2O = a ribonucleoside + phosphate. Nucleotidase that shows phosphatase activity on nucleoside 5'-monophosphates. In Ehrlichia ruminantium (strain Welgevonden), this protein is 5'-nucleotidase SurE.